We begin with the raw amino-acid sequence, 1171 residues long: ATP-dependent helicase/deoxyribonuclease subunit B (1171 aa).

The 390-residue stretch at 1–390 folds into the UvrD-like helicase ATP-binding domain; the sequence is MSLRFVIGRA…HPLVECIRSA (390 aa). 8–15 lines the ATP pocket; that stretch reads GRAGSGKS. The UvrD-like helicase C-terminal domain occupies 281–587; the sequence is MEQPRFHSPA…QFANIPPSLD (307 aa). [4Fe-4S] cluster is bound by residues cysteine 805, cysteine 1129, cysteine 1132, and cysteine 1138.

Belongs to the helicase family. AddB/RexB type 1 subfamily. In terms of assembly, heterodimer of AddA and AddB. Mg(2+) serves as cofactor. [4Fe-4S] cluster is required as a cofactor.

Functionally, the heterodimer acts as both an ATP-dependent DNA helicase and an ATP-dependent, dual-direction single-stranded exonuclease. Recognizes the chi site generating a DNA molecule suitable for the initiation of homologous recombination. The AddB subunit has 5' -&gt; 3' nuclease activity but not helicase activity. The protein is ATP-dependent helicase/deoxyribonuclease subunit B of Bacillus cereus (strain B4264).